A 131-amino-acid polypeptide reads, in one-letter code: Small ribosomal subunit protein uS12 (131 aa).

Residue aspartate 89 is modified to 3-methylthioaspartic acid. The tract at residues 106–131 (GVDGRKQGRSKYGAKKAKVAKTASAK) is disordered. Positions 112 to 124 (QGRSKYGAKKAKV) are enriched in basic residues.

The protein belongs to the universal ribosomal protein uS12 family. As to quaternary structure, part of the 30S ribosomal subunit. Contacts proteins S8 and S17. May interact with IF1 in the 30S initiation complex.

Functionally, with S4 and S5 plays an important role in translational accuracy. In terms of biological role, interacts with and stabilizes bases of the 16S rRNA that are involved in tRNA selection in the A site and with the mRNA backbone. Located at the interface of the 30S and 50S subunits, it traverses the body of the 30S subunit contacting proteins on the other side and probably holding the rRNA structure together. The combined cluster of proteins S8, S12 and S17 appears to hold together the shoulder and platform of the 30S subunit. The polypeptide is Small ribosomal subunit protein uS12 (Endomicrobium trichonymphae).